The primary structure comprises 995 residues: Zinc finger protein ZFPM1 (995 aa).

Positions 1-14 (MSRRKQSNPRQIKR) are enriched in basic residues. The tract at residues 1 to 103 (MSRRKQSNPR…EAAMASPWSG (103 aa)) is disordered. Basic and acidic residues predominate over residues 15-36 (SLRDMEAGEEAKAMDSSPKEQE). Acidic residues-rich tracts occupy residues 67-78 (SPEDPEDMEGQE) and 86-95 (EEKEEKEEEA). Phosphoserine is present on residues S99 and S143. The CCHC FOG-type 1 zinc finger occupies 249–282 (VINKDVFPCKDCGIWYRSERNLQAHLLYYCASRQ). Positions 257, 260, 273, and 278 each coordinate Zn(2+). S286 is subject to Phosphoserine. C2H2-type zinc fingers lie at residues 303-327 (RVCP…MRSH), 333-355 (FVCL…LKVH), and 361-384 (GVCH…VTNH). The interaction with TACC3 stretch occupies residues 343-354 (TTKANCERHLKV). S397, S497, and S500 each carry phosphoserine. The tract at residues 424–526 (PLVPADKAPT…SSPGPGELTM (103 aa)) is disordered. Residues 509-525 (ELSSPTPGSSPGPGELT) show a composition bias toward low complexity. The CCHC FOG-type 2 zinc-finger motif lies at 584–617 (FSGTKGATCFECEITFNNINNFYVHKRLYCSGRR). C592, C595, H608, and C613 together coordinate Zn(2+). Residues 616 to 694 (RRAPEDPPTV…SVDDAEDDPS (79 aa)) form a disordered region. Residues 630–652 (AATGPARAPAGAAAEPDPSRSSP) are compositionally biased toward low complexity. S651 and S684 each carry phosphoserine. Residues 690 to 723 (EDDPSRTLCEACNIRFSRHETYTVHKRYYCASRH) form a CCHC FOG-type 3 zinc finger. The Zn(2+) site is built by C698, C701, H714, and C719. Positions 721 to 827 (SRHDPPPRRP…PRRQSPDAPT (107 aa)) are disordered. Composition is skewed to pro residues over residues 728-740 (RRPP…PGPA) and 764-779 (GAPP…PVVP). A compositionally biased stretch (low complexity) spans 785–800 (LPSSPRPGSASAGPAP). S803 carries the phosphoserine modification. The tract at residues 811–817 (PIDLSKR) is interaction with CTBP2. S822 carries the post-translational modification Phosphoserine. A CCHC FOG-type 4 zinc finger spans residues 830-863 (PALADYHECTACRVSFHSLEAYLAHKKYSCPAAP). Residues C838, C841, H854, and C859 each contribute to the Zn(2+) site. The C2H2-type 4 zinc-finger motif lies at 868 to 891 (ALCPYCPPNGRVRGDLVEHLRQAH). Residues 892-960 (GLQVAKPAAS…APAPAPGGGG (69 aa)) form a disordered region. Basic and acidic residues predominate over residues 908–922 (TPAERAPRDSPDGRA). A phosphoserine mark is found at S925 and S927. Residues 957-990 (GGGGGHRYCRLCNIRFSSLSTFIAHKKYYCSSHA) form a CCHC FOG-type 5 zinc finger. Zn(2+) contacts are provided by C965, C968, H981, and C986.

Belongs to the FOG (Friend of GATA) family. Interacts with the N-terminal zinc-finger of GATA1, GATA2 and GATA3. Interacts with corepressor CTBP2; this interaction is however not essential for corepressor activity in erythropoiesis. Interacts with TACC3. In terms of tissue distribution, mainly expressed in hematopoietic tissues. Expressed in the spleen, a primary site of hematopoiesis in the adult mouse, as well as in the liver and testis, but not in the heart, brain, lung, kidney, or skeletal muscle. Among hematopoietic cell lines, it is strongly expressed in erythroid and megakaryocytic cell lines. Expressed at low level in several lymphoid and early myeloid cell lines. Not expressed in mast cell and macrophage lines. Expressed in the heart, where it colocalizes with GATA4, GATA5 and GATA6.

Its subcellular location is the nucleus. Transcription regulator that plays an essential role in erythroid and megakaryocytic cell differentiation. Essential cofactor that acts via the formation of a heterodimer with transcription factors of the GATA family GATA1, GATA2 and GATA3. Such heterodimer can both activate or repress transcriptional activity, depending on the cell and promoter context. The heterodimer formed with GATA proteins is essential to activate expression of genes such as NFE2, ITGA2B, alpha- and beta-globin, while it represses expression of KLF1. May be involved in regulation of some genes in gonads. May also be involved in cardiac development, in a non-redundant way with ZFPM2/FOG2. This Mus musculus (Mouse) protein is Zinc finger protein ZFPM1 (Zfpm1).